A 177-amino-acid polypeptide reads, in one-letter code: Endoribonuclease YbeY (177 aa).

3 residues coordinate Zn(2+): histidine 142, histidine 146, and histidine 152.

It belongs to the endoribonuclease YbeY family. It depends on Zn(2+) as a cofactor.

It localises to the cytoplasm. Functionally, single strand-specific metallo-endoribonuclease involved in late-stage 70S ribosome quality control and in maturation of the 3' terminus of the 16S rRNA. The protein is Endoribonuclease YbeY of Synechococcus sp. (strain CC9311).